A 65-amino-acid chain; its full sequence is Large ribosomal subunit protein bL33 (65 aa).

A disordered region spans residues 19-40 (TVPSSKKRSAGVSRYTTEKNRR).

Belongs to the bacterial ribosomal protein bL33 family.

This chain is Large ribosomal subunit protein bL33, found in Prochlorococcus marinus (strain NATL2A).